The sequence spans 237 residues: Pheromone-regulated membrane protein 8 (237 aa).

Over 1-47 (MQTPSENTNAKSDSLDEPGAYLIEENVALPKDIFHSYLSYWIYEAAH) the chain is Cytoplasmic. Residues 48–68 (CTPVMLLSLVIGVLISIIILF) traverse the membrane as a helical segment. The Extracellular portion of the chain corresponds to 69 to 74 (HDNENC). The helical transmembrane segment at 75–95 (VGVSVGFLLIFSGILVIVLIL) threads the bilayer. The Cytoplasmic portion of the chain corresponds to 96–237 (RFGPQISDED…QEYPGVDEFF (142 aa)). A disordered region spans residues 174 to 201 (SSASNVKDAQSNDETAGTPNEAAESSSF). The tract at residues 236 to 237 (FF) is COPII binding.

The protein belongs to the DUP/COS family. As to quaternary structure, interacts with PRM9. Binds to SEC23/24 of COPII coated vesicles.

The protein localises to the membrane. The protein resides in the endoplasmic reticulum. Functionally, may be involved in endoplasmic reticulum exit trafficking of proteins. The protein is Pheromone-regulated membrane protein 8 (PRM8) of Saccharomyces cerevisiae (strain ATCC 204508 / S288c) (Baker's yeast).